The chain runs to 965 residues: Phosphoenolpyruvate carboxylase (965 aa).

Serine 11 carries the post-translational modification Phosphoserine. Active-site residues include histidine 173 and lysine 601.

The protein belongs to the PEPCase type 1 family. As to quaternary structure, homotetramer. It depends on Mg(2+) as a cofactor.

The protein resides in the cytoplasm. The catalysed reaction is oxaloacetate + phosphate = phosphoenolpyruvate + hydrogencarbonate. Its pathway is photosynthesis; C3 acid pathway. By light-reversible phosphorylation. Its function is as follows. Through the carboxylation of phosphoenolpyruvate (PEP) it forms oxaloacetate, a four-carbon dicarboxylic acid source for the tricarboxylic acid cycle. This Solanum tuberosum (Potato) protein is Phosphoenolpyruvate carboxylase (PPC1).